Here is a 214-residue protein sequence, read N- to C-terminus: Cytochrome c biogenesis ATP-binding export protein CcmA (214 aa).

In terms of domain architecture, ABC transporter spans 16–212 (LRVSGLSLSR…PDAKRIDLGA (197 aa)). Residue 48–55 (GPNGTGKT) participates in ATP binding.

Belongs to the ABC transporter superfamily. CcmA exporter (TC 3.A.1.107) family. In terms of assembly, the complex is composed of two ATP-binding proteins (CcmA) and two transmembrane proteins (CcmB).

It is found in the cell inner membrane. It catalyses the reaction heme b(in) + ATP + H2O = heme b(out) + ADP + phosphate + H(+). In terms of biological role, part of the ABC transporter complex CcmAB involved in the biogenesis of c-type cytochromes; once thought to export heme, this seems not to be the case, but its exact role is uncertain. Responsible for energy coupling to the transport system. In Maricaulis maris (strain MCS10) (Caulobacter maris), this protein is Cytochrome c biogenesis ATP-binding export protein CcmA.